The sequence spans 577 residues: 9-cis-epoxycarotenoid dioxygenase NCED6, chloroplastic (577 aa).

A disordered region spans residues 1 to 25 (MQHSLRSDLLPTKTSPRSHLLPQPK). The Fe cation site is built by H276, H325, H390, and H563.

It belongs to the carotenoid oxygenase family. Requires Fe(2+) as cofactor. Expressed before fertilization in male and female gametophytes, and then immediately after pollination, restricted to seed endosperm.

Its subcellular location is the plastid. It localises to the chloroplast stroma. The enzyme catalyses a 9-cis-epoxycarotenoid + O2 = a 12'-apo-carotenal + 2-cis,4-trans-xanthoxin. The catalysed reaction is 9-cis-violaxanthin + O2 = (3S,5R,6S)-5,6-epoxy-3-hydroxy-5,6-dihydro-12'-apo-beta-caroten-12'-al + 2-cis,4-trans-xanthoxin. It catalyses the reaction 9'-cis-neoxanthin + O2 = (3S,5R,6R)-3,5-dihydroxy-6,7-didehydro-5,6-dihydro-12'-apo-beta-caroten-12'-al + 2-cis,4-trans-xanthoxin. In terms of biological role, has a 11,12(11',12') 9-cis epoxycarotenoid cleavage activity. Catalyzes the first step of abscisic-acid biosynthesis from carotenoids. Contributes probably to abscisic acid synthesis for the induction of seed dormancy. The sequence is that of 9-cis-epoxycarotenoid dioxygenase NCED6, chloroplastic (NCED6) from Arabidopsis thaliana (Mouse-ear cress).